We begin with the raw amino-acid sequence, 401 residues long: S-adenosylmethionine synthase (401 aa).

His-15 serves as a coordination point for ATP. Asp-17 is a Mg(2+) binding site. A K(+)-binding site is contributed by Glu-43. The L-methionine site is built by Glu-56 and Gln-99. The segment at 99 to 109 (QSPEIGAGVDT) is flexible loop. Residues 101–132 (PEIGAGVDTSHEVRGSSSTDEDDRQGAGDQGL) are disordered. Residues 174 to 176 (DGK), Asp-254, 260 to 261 (RK), Ala-277, and Lys-281 contribute to the ATP site. L-methionine is bound at residue Asp-254. Lys-285 contributes to the L-methionine binding site.

It belongs to the AdoMet synthase family. In terms of assembly, homotetramer; dimer of dimers. The cofactor is Mg(2+). K(+) serves as cofactor.

The protein resides in the cytoplasm. It carries out the reaction L-methionine + ATP + H2O = S-adenosyl-L-methionine + phosphate + diphosphate. The protein operates within amino-acid biosynthesis; S-adenosyl-L-methionine biosynthesis; S-adenosyl-L-methionine from L-methionine: step 1/1. Functionally, catalyzes the formation of S-adenosylmethionine (AdoMet) from methionine and ATP. The overall synthetic reaction is composed of two sequential steps, AdoMet formation and the subsequent tripolyphosphate hydrolysis which occurs prior to release of AdoMet from the enzyme. The sequence is that of S-adenosylmethionine synthase from Corynebacterium urealyticum (strain ATCC 43042 / DSM 7109).